The chain runs to 469 residues: Glutamate--tRNA ligase (469 aa).

The 'HIGH' region motif lies at 12 to 22; sequence PSPTGFIHLGN. The 'KMSKS' region signature appears at 244–248; that stretch reads KMSKR. Lysine 247 provides a ligand contact to ATP.

Belongs to the class-I aminoacyl-tRNA synthetase family. Glutamate--tRNA ligase type 1 subfamily. In terms of assembly, monomer.

The protein resides in the cytoplasm. It catalyses the reaction tRNA(Glu) + L-glutamate + ATP = L-glutamyl-tRNA(Glu) + AMP + diphosphate. Catalyzes the attachment of glutamate to tRNA(Glu) in a two-step reaction: glutamate is first activated by ATP to form Glu-AMP and then transferred to the acceptor end of tRNA(Glu). The protein is Glutamate--tRNA ligase of Acidovorax sp. (strain JS42).